We begin with the raw amino-acid sequence, 298 residues long: Ribosomal RNA small subunit methyltransferase H (298 aa).

Residues 35–37 (GGH), Asp-55, Phe-82, Asp-100, and Gln-107 contribute to the S-adenosyl-L-methionine site.

This sequence belongs to the methyltransferase superfamily. RsmH family.

The protein localises to the cytoplasm. It carries out the reaction cytidine(1402) in 16S rRNA + S-adenosyl-L-methionine = N(4)-methylcytidine(1402) in 16S rRNA + S-adenosyl-L-homocysteine + H(+). In terms of biological role, specifically methylates the N4 position of cytidine in position 1402 (C1402) of 16S rRNA. This chain is Ribosomal RNA small subunit methyltransferase H, found in Chlamydia abortus (strain DSM 27085 / S26/3) (Chlamydophila abortus).